The following is a 428-amino-acid chain: Enolase (428 aa).

Glutamine 164 serves as a coordination point for (2R)-2-phosphoglycerate. The active-site Proton donor is glutamate 206. Positions 243, 286, and 313 each coordinate Mg(2+). (2R)-2-phosphoglycerate is bound by residues lysine 338, arginine 367, serine 368, and lysine 389. The active-site Proton acceptor is lysine 338.

The protein belongs to the enolase family. Mg(2+) is required as a cofactor.

It is found in the cytoplasm. It localises to the secreted. The protein localises to the cell surface. The enzyme catalyses (2R)-2-phosphoglycerate = phosphoenolpyruvate + H2O. It functions in the pathway carbohydrate degradation; glycolysis; pyruvate from D-glyceraldehyde 3-phosphate: step 4/5. Its function is as follows. Catalyzes the reversible conversion of 2-phosphoglycerate (2-PG) into phosphoenolpyruvate (PEP). It is essential for the degradation of carbohydrates via glycolysis. The sequence is that of Enolase from Dehalococcoides mccartyi (strain ATCC BAA-2100 / JCM 16839 / KCTC 5957 / BAV1).